A 166-amino-acid chain; its full sequence is Glycine cleavage system H protein 3, mitochondrial (166 aa).

The N-terminal 35 residues, 1–35 (MALRMWASSTANALKLSSSASKSHLLPAFSISRCF), are a transit peptide targeting the mitochondrion. A Lipoyl-binding domain is found at 57 to 139 (VATIGITDHA…YEDGWMIKVK (83 aa)). Lysine 98 is subject to N6-lipoyllysine. Serine 141 bears the Phosphoserine mark.

Belongs to the GcvH family. The glycine cleavage system is composed of four proteins: P, T, L and H. (R)-lipoate is required as a cofactor. Post-translationally, S-nitrosylated and/or glutathionylated at unknown positions in response to nitric oxide.

Its subcellular location is the mitochondrion. With respect to regulation, inhibited by harpin, S-nitrosoglutathione (GSNO), nitric oxide, N-ethylmaleimide and 5,5'-dithiobis-(2-nitrobenzoic acid). The glycine decarboxylase (GDC) or glycine cleavage system catalyzes the degradation of glycine. The H protein shuttles the methylamine group of glycine from the P protein to the T protein. This Arabidopsis thaliana (Mouse-ear cress) protein is Glycine cleavage system H protein 3, mitochondrial (GDH3).